Reading from the N-terminus, the 262-residue chain is Transmembrane protein 270 (262 aa).

Helical transmembrane passes span 6-26, 30-50, 67-87, 92-112, and 127-147; these read LVRS…ALLI, AHLY…LLGL, PVGR…CLAL, LVWA…KWLG, and LFLS…LLVW. The tract at residues 226-262 is disordered; it reads QEAEPQKALGLSSETPPPGPPAPGARPVLPEPGTPGE. Residues 240–262 show a composition bias toward pro residues; it reads TPPPGPPAPGARPVLPEPGTPGE.

The protein localises to the membrane. This is Transmembrane protein 270 from Bos taurus (Bovine).